Reading from the N-terminus, the 339-residue chain is Annexin A2 (339 aa).

Ser-2 bears the N-acetylserine mark. The segment at 2 to 24 (STVHEILCKLSLEGDHSTPPSAY) is S100A10-binding site. A Phosphotyrosine; by SRC modification is found at Tyr-24. The residue at position 26 (Ser-26) is a Phosphoserine; by PKC. 2 Annexin repeats span residues 33–104 (FDAE…GLLK) and 105–176 (TPAQ…ALAK). At Lys-49 the chain carries N6-acetyllysine; alternate. Lys-49 participates in a covalent cross-link: Glycyl lysine isopeptide (Lys-Gly) (interchain with G-Cter in SUMO1); alternate. Residue Lys-49 forms a Glycyl lysine isopeptide (Lys-Gly) (interchain with G-Cter in SUMO2); alternate linkage. Lys-152 is subject to N6-acetyllysine. The residue at position 184 (Ser-184) is a Phosphoserine. Annexin repeat units lie at residues 189–261 (ELID…NLVQ) and 265–336 (NKPL…YLCG). Tyr-199 is subject to Phosphotyrosine. Lys-227 carries the post-translational modification N6-acetyllysine.

Belongs to the annexin family. As to quaternary structure, heterotetramer containing 2 light chains of S100A10/p11 and 2 heavy chains of ANXA2/p36. Interacts with ATP1B1. Interacts with DYSF. Interacts with COCH. Interacts (via repeat Annexin 1) with PCSK9 (via the C-terminal domain); the interaction inhibits the degradation of LDLR. Interacts with CEACAM1 (via the cytoplasmic domain); this interaction is regulated by phosphorylation of CEACAM1. Interacts with APPL2 and APPL1; targets APPL2 to endosomes and acting in parallel to RAB5A. Interacts with S100A4. May interact with UBAP2. Interacts with PLEKHG4B; this interaction is required for PLEKHG4B localization to cell-cell adhesions. In terms of assembly, (Microbial infection) Interacts with human cytomegalovirus (HCMV). (Microbial infection) Interacts with M.pneumoniae CARDS toxin; CARDS probably uses this protein as a receptor. A portion of internalized CARDS remains associated with intracellular annexin 2. Post-translationally, phosphorylation of Tyr-24 enhances heat stress-induced translocation to the cell surface. In terms of processing, ISGylated.

It is found in the secreted. The protein resides in the extracellular space. Its subcellular location is the extracellular matrix. It localises to the basement membrane. The protein localises to the melanosome. Calcium-regulated membrane-binding protein whose affinity for calcium is greatly enhanced by anionic phospholipids. It binds two calcium ions with high affinity. May be involved in heat-stress response. Inhibits PCSK9-enhanced LDLR degradation, probably reduces PCSK9 protein levels via a translational mechanism but also competes with LDLR for binding with PCSK9. Binds to endosomes damaged by phagocytosis of particulate wear debris and participates in endosomal membrane stabilization, thereby limiting NLRP3 inflammasome activation. Required for endothelial cell surface plasmin generation and may support fibrinolytic surveillance and neoangiogenesis. Functionally, (Microbial infection) Binds M.pneumoniae CARDS toxin, probably serves as one receptor for this pathogen. When ANXA2 is down-regulated by siRNA, less toxin binds to human cells and less vacuolization (a symptom of M.pneumoniae infection) is seen. The sequence is that of Annexin A2 (ANXA2) from Homo sapiens (Human).